The primary structure comprises 242 residues: Small ribosomal subunit protein uS2 (242 aa).

It belongs to the universal ribosomal protein uS2 family.

This is Small ribosomal subunit protein uS2 from Shewanella denitrificans (strain OS217 / ATCC BAA-1090 / DSM 15013).